The chain runs to 320 residues: Heptaprenyl diphosphate synthase component 2 (320 aa).

The isopentenyl diphosphate site is built by Lys45, Arg48, and His77. Residues Asp84 and Asp88 each coordinate Mg(2+). All-trans-hexaprenyl diphosphate is bound at residue Arg93. Arg94 is a binding site for isopentenyl diphosphate. Residues Lys170, Thr171, and Gln208 each contribute to the all-trans-hexaprenyl diphosphate site.

Belongs to the FPP/GGPP synthase family. As to quaternary structure, heterodimer of component I and II. The cofactor is Mg(2+).

It catalyses the reaction 4 isopentenyl diphosphate + (2E,6E)-farnesyl diphosphate = all-trans-heptaprenyl diphosphate + 4 diphosphate. In terms of biological role, supplies heptaprenyl diphosphate, the precursor for the side chain of the isoprenoid quinone menaquinone-7 (MQ-7). This chain is Heptaprenyl diphosphate synthase component 2 (hepT), found in Geobacillus stearothermophilus (Bacillus stearothermophilus).